An 801-amino-acid chain; its full sequence is MKYGYFDNDNREYVITRPDVPAPWTNYLGTEKFCTVISHNAGGYSFYNSPEYNRVTKFRPNATFDRPGHYVYLRDDDSGDYWSISWQPVAKSLDEAQYQIRHGLSYSKFQCDYNGIHARKTLFVPKGEDAEIWDVVIKNTSDQVRTISAFSFVEFSFSHIQSDNQNHQMSLYSAGTAYRPGLIEYDLYYNTDDFEGFYYLASTFDPDSYDGQRDRFLGLYRDEANPLAVEQGRCSNSAQTCYNHCGSLHKQFTLQPGEEIRFAYILGIGKGNGERLREHYQDVANIDAAFAAIKAHWDERCAKFQVKSPNQGLDTMINAWTLYQAETCVVWSRFASFIEVGGRTGLGYRDTAQDAISVPHANPEMTRKRIVDLLRGQVKAGYGLHLFDPDWFDPEKEDVAPSKSPTVVPTPSDEDKIHGIKDTCSDDHLWLIPTICKYVMETGETSFFDQMIPYADGGEASVYEHMKAALDFSAEYVGQTGICKGLRADWNDCLNLGGGESSMVSFLHFWALQEFIDLAKFLGKDQDVNTYTEMAANVREACETHLWDDEGGWYIRGLTKNGDKIGTAQQQEGRVHLESNTLAVLSGLASQERGEQAMDAVDEHLFSPYGLHLNAPSFSTPNDDIGFVTRVYQGVKENGAIFSHPNPWAWVAETKLGRGDRAMKFYDALNPYNQNDIIEKRIAEPYSYVQFIMGRDHQDHGRANHPWLTGTSGWAYFAVTNYILGVQSGFTGLSVDPCIPSDWPGFEVTRQWRGATYHIQVENPDHVSKGVKSITLNGAPIQGRIPPQAQGSDNQVVVVLG.

N-acetyl-alpha-D-glucosamine 1-phosphate is bound by residues Arg-333, Arg-343, Arg-349, Asp-350, Trp-490, and Asp-492. Asp-492 serves as the catalytic Proton donor. N-acetyl-D-glucosamine-binding residues include Asp-492, Lys-636, and Glu-637. The N-acetyl-alpha-D-glucosamine 1-phosphate site is built by Glu-637, His-644, Gln-690, Thr-709, and Gly-710.

It belongs to the glycosyl hydrolase 94 family. As to quaternary structure, homodimer.

The enzyme catalyses N,N'-diacetylchitobiose + phosphate = N-acetyl-alpha-D-glucosamine 1-phosphate + N-acetyl-D-glucosamine. Its function is as follows. Catalyzes the reversible phosphorolysis of chitobiose (N,N'-diacetylchitobiose or (GlcNAc)(2)) into N-acetyl-alpha-D-glucosamine 1-phosphate (GlcNAc-1-P) and N-acetyl-D-glucosamine (GlcNAc) with inversion of the anomeric configuration. In the synthetic reaction, is also active on glucose-1-phosphate with 10% activity as compared with that on GlcNAc-1-P. GlcNAc is the best acceptor substrate, but the enzyme can use aryl-beta-glycosides of GlcNAc as the acceptor substrate with 10-20% activities of GlcNAc. Shows no phosphorolytic activity on cellobiose. This chain is N,N'-diacetylchitobiose phosphorylase, found in Vibrio proteolyticus (Aeromonas proteolytica).